Reading from the N-terminus, the 169-residue chain is ATP synthase subunit b (169 aa).

A helical transmembrane segment spans residues 11–31; it reads IPSFIAQVVNFGLLLGLLYLF.

The protein belongs to the ATPase B chain family. In terms of assembly, F-type ATPases have 2 components, F(1) - the catalytic core - and F(0) - the membrane proton channel. F(1) has five subunits: alpha(3), beta(3), gamma(1), delta(1), epsilon(1). F(0) has three main subunits: a(1), b(2) and c(10-14). The alpha and beta chains form an alternating ring which encloses part of the gamma chain. F(1) is attached to F(0) by a central stalk formed by the gamma and epsilon chains, while a peripheral stalk is formed by the delta and b chains.

The protein resides in the cell membrane. Its function is as follows. F(1)F(0) ATP synthase produces ATP from ADP in the presence of a proton or sodium gradient. F-type ATPases consist of two structural domains, F(1) containing the extramembraneous catalytic core and F(0) containing the membrane proton channel, linked together by a central stalk and a peripheral stalk. During catalysis, ATP synthesis in the catalytic domain of F(1) is coupled via a rotary mechanism of the central stalk subunits to proton translocation. Functionally, component of the F(0) channel, it forms part of the peripheral stalk, linking F(1) to F(0). The chain is ATP synthase subunit b from Dehalococcoides mccartyi (strain ATCC BAA-2266 / KCTC 15142 / 195) (Dehalococcoides ethenogenes (strain 195)).